We begin with the raw amino-acid sequence, 85 residues long: Progonadoliberin-2 (85 aa).

Positions Met1–Gly23 are cleaved as a signal peptide. Pyrrolidone carboxylic acid is present on Gln24. Gly33 is modified (glycine amide).

The protein belongs to the GnRH family. As to expression, midbrain tegmentum.

The protein localises to the secreted. Stimulates the secretion of gonadotropins. This Verasper moseri (Barfin flounder) protein is Progonadoliberin-2 (gnrh2).